Consider the following 210-residue polypeptide: Thiamine-phosphate synthase (210 aa).

4-amino-2-methyl-5-(diphosphooxymethyl)pyrimidine-binding positions include 36–40 (QLRIK) and Asn-68. Residues Asp-69 and Asp-88 each coordinate Mg(2+). 4-amino-2-methyl-5-(diphosphooxymethyl)pyrimidine is bound at residue Ser-107. A 2-[(2R,5Z)-2-carboxy-4-methylthiazol-5(2H)-ylidene]ethyl phosphate-binding site is contributed by 133 to 135 (TQT). Lys-136 is a binding site for 4-amino-2-methyl-5-(diphosphooxymethyl)pyrimidine. Residues Gly-165 and 185–186 (VS) each bind 2-[(2R,5Z)-2-carboxy-4-methylthiazol-5(2H)-ylidene]ethyl phosphate.

The protein belongs to the thiamine-phosphate synthase family. The cofactor is Mg(2+).

The enzyme catalyses 2-[(2R,5Z)-2-carboxy-4-methylthiazol-5(2H)-ylidene]ethyl phosphate + 4-amino-2-methyl-5-(diphosphooxymethyl)pyrimidine + 2 H(+) = thiamine phosphate + CO2 + diphosphate. The catalysed reaction is 2-(2-carboxy-4-methylthiazol-5-yl)ethyl phosphate + 4-amino-2-methyl-5-(diphosphooxymethyl)pyrimidine + 2 H(+) = thiamine phosphate + CO2 + diphosphate. It carries out the reaction 4-methyl-5-(2-phosphooxyethyl)-thiazole + 4-amino-2-methyl-5-(diphosphooxymethyl)pyrimidine + H(+) = thiamine phosphate + diphosphate. Its pathway is cofactor biosynthesis; thiamine diphosphate biosynthesis; thiamine phosphate from 4-amino-2-methyl-5-diphosphomethylpyrimidine and 4-methyl-5-(2-phosphoethyl)-thiazole: step 1/1. Its function is as follows. Condenses 4-methyl-5-(beta-hydroxyethyl)thiazole monophosphate (THZ-P) and 2-methyl-4-amino-5-hydroxymethyl pyrimidine pyrophosphate (HMP-PP) to form thiamine monophosphate (TMP). The protein is Thiamine-phosphate synthase of Cronobacter sakazakii (strain ATCC BAA-894) (Enterobacter sakazakii).